A 295-amino-acid polypeptide reads, in one-letter code: Pyridoxal 5'-phosphate synthase subunit PdxS (295 aa).

Residue Asp25 coordinates D-ribose 5-phosphate. Residue Lys82 is the Schiff-base intermediate with D-ribose 5-phosphate of the active site. Residue Gly154 coordinates D-ribose 5-phosphate. Arg166 serves as a coordination point for D-glyceraldehyde 3-phosphate. D-ribose 5-phosphate is bound by residues Gly215 and 236 to 237; that span reads GS.

This sequence belongs to the PdxS/SNZ family. In terms of assembly, in the presence of PdxT, forms a dodecamer of heterodimers.

The catalysed reaction is aldehydo-D-ribose 5-phosphate + D-glyceraldehyde 3-phosphate + L-glutamine = pyridoxal 5'-phosphate + L-glutamate + phosphate + 3 H2O + H(+). The protein operates within cofactor biosynthesis; pyridoxal 5'-phosphate biosynthesis. Its function is as follows. Catalyzes the formation of pyridoxal 5'-phosphate from ribose 5-phosphate (RBP), glyceraldehyde 3-phosphate (G3P) and ammonia. The ammonia is provided by the PdxT subunit. Can also use ribulose 5-phosphate and dihydroxyacetone phosphate as substrates, resulting from enzyme-catalyzed isomerization of RBP and G3P, respectively. This Bacillus cereus (strain 03BB102) protein is Pyridoxal 5'-phosphate synthase subunit PdxS.